Consider the following 724-residue polypeptide: Threonine--tRNA ligase 2, cytoplasmic (724 aa).

A2 carries the N-acetylalanine modification. The stretch at 44–72 forms a coiled coil; it reads QAEGPCLTREVAQLRAENRELRHCLYRLR. The segment at 90 to 112 is disordered; that stretch reads RAEAGRAAAGAQPPPSQSLEEDV. The TGS domain maps to 155-220; sequence DSSNVITVRV…EGDATVELLT (66 aa). At S451 the chain carries Phosphoserine.

Belongs to the class-II aminoacyl-tRNA synthetase family. May be a component of the multisynthetase complex (MSC), a large multi-subunit complex which contains at least eight different aminoacyl-tRNA synthetases plus three auxillary subunits AIMP1, AIMP2 and EEF1E1. Interacts with the MSC components EPRS1, AIMP1, AIMP2 and KARS1.

It localises to the cytoplasm. It is found in the nucleus. It catalyses the reaction tRNA(Thr) + L-threonine + ATP = L-threonyl-tRNA(Thr) + AMP + diphosphate + H(+). In terms of biological role, catalyzes the attachment of threonine to tRNA(Thr) in a two-step reaction: threonine is first activated by ATP to form Thr-AMP and then transferred to the acceptor end of tRNA(Thr). Also edits incorrectly charged tRNA(Thr) via its editing domain, at the post-transfer stage. The polypeptide is Threonine--tRNA ligase 2, cytoplasmic (TARS3) (Bos taurus (Bovine)).